Reading from the N-terminus, the 208-residue chain is Imidazole glycerol phosphate synthase subunit HisH (208 aa).

The Glutamine amidotransferase type-1 domain maps to 1 to 206; that stretch reads MIVIIDYDTG…KEVTESCKSS (206 aa). Cysteine 79 serves as the catalytic Nucleophile. Catalysis depends on residues histidine 181 and glutamate 183.

Heterodimer of HisH and HisF.

The protein localises to the cytoplasm. It carries out the reaction 5-[(5-phospho-1-deoxy-D-ribulos-1-ylimino)methylamino]-1-(5-phospho-beta-D-ribosyl)imidazole-4-carboxamide + L-glutamine = D-erythro-1-(imidazol-4-yl)glycerol 3-phosphate + 5-amino-1-(5-phospho-beta-D-ribosyl)imidazole-4-carboxamide + L-glutamate + H(+). It catalyses the reaction L-glutamine + H2O = L-glutamate + NH4(+). Its pathway is amino-acid biosynthesis; L-histidine biosynthesis; L-histidine from 5-phospho-alpha-D-ribose 1-diphosphate: step 5/9. Functionally, IGPS catalyzes the conversion of PRFAR and glutamine to IGP, AICAR and glutamate. The HisH subunit catalyzes the hydrolysis of glutamine to glutamate and ammonia as part of the synthesis of IGP and AICAR. The resulting ammonia molecule is channeled to the active site of HisF. The sequence is that of Imidazole glycerol phosphate synthase subunit HisH from Listeria innocua serovar 6a (strain ATCC BAA-680 / CLIP 11262).